The following is a 60-amino-acid chain: UPF0434 protein NMC0623 (60 aa).

This sequence belongs to the UPF0434 family.

The protein is UPF0434 protein NMC0623 of Neisseria meningitidis serogroup C / serotype 2a (strain ATCC 700532 / DSM 15464 / FAM18).